Here is a 340-residue protein sequence, read N- to C-terminus: Glyceraldehyde-3-phosphate dehydrogenase (340 aa).

Residues 11 to 12 (TI) and Gly-109 contribute to the NAD(+) site. Position 138–140 (138–140 (SCN)) interacts with D-glyceraldehyde 3-phosphate. The Nucleophile role is filled by Cys-139. Arg-167 serves as a coordination point for NAD(+). 193-194 (HA) lines the D-glyceraldehyde 3-phosphate pocket. Gln-300 serves as a coordination point for NAD(+).

Belongs to the glyceraldehyde-3-phosphate dehydrogenase family. As to quaternary structure, homotetramer.

The protein localises to the cytoplasm. It catalyses the reaction D-glyceraldehyde 3-phosphate + phosphate + NADP(+) = (2R)-3-phospho-glyceroyl phosphate + NADPH + H(+). The enzyme catalyses D-glyceraldehyde 3-phosphate + phosphate + NAD(+) = (2R)-3-phospho-glyceroyl phosphate + NADH + H(+). It participates in carbohydrate degradation; glycolysis; pyruvate from D-glyceraldehyde 3-phosphate: step 1/5. The chain is Glyceraldehyde-3-phosphate dehydrogenase from Saccharolobus islandicus (strain L.S.2.15 / Lassen #1) (Sulfolobus islandicus).